The chain runs to 686 residues: Translation initiation factor IF-2 (686 aa).

The disordered stretch occupies residues 35-99 (MSTVEDETAE…EHGQKDTDRR (65 aa)). Over residues 50 to 68 (LQEEDKPEEKISKKEPDKK) the composition is skewed to basic and acidic residues. Basic residues predominate over residues 69 to 79 (DRKKTKGKKQM). The segment covering 87–99 (EGTEHGQKDTDRR) has biased composition (basic and acidic residues). In terms of domain architecture, tr-type G spans 186–355 (LRPPIVTVMG…LLVAEMEELK (170 aa)). Residues 195 to 202 (GHVDHGKT) form a G1 region. 195 to 202 (GHVDHGKT) contacts GTP. The G2 stretch occupies residues 220-224 (GITQH). The G3 stretch occupies residues 241 to 244 (DTPG). GTP is bound by residues 241–245 (DTPGH) and 295–298 (NKVD). Residues 295-298 (NKVD) are G4. A G5 region spans residues 331-333 (SAL).

The protein belongs to the TRAFAC class translation factor GTPase superfamily. Classic translation factor GTPase family. IF-2 subfamily.

The protein resides in the cytoplasm. Functionally, one of the essential components for the initiation of protein synthesis. Protects formylmethionyl-tRNA from spontaneous hydrolysis and promotes its binding to the 30S ribosomal subunits. Also involved in the hydrolysis of GTP during the formation of the 70S ribosomal complex. The chain is Translation initiation factor IF-2 from Halothermothrix orenii (strain H 168 / OCM 544 / DSM 9562).